A 428-amino-acid chain; its full sequence is Nuclear hormone receptor family member nhr-44 (428 aa).

The segment at residues 21–98 (SEKCLVCFQP…LGMKPDNIQR (78 aa)) is a DNA-binding region (nuclear receptor). 2 NR C4-type zinc fingers span residues 24–44 (CLVCFQPSHGNHFGVDSCRAC) and 61–86 (CREGDNKCTPDEWGRWSCKRCRSDKC). The NR LBD domain maps to 181–427 (SLEQLAFGLQ…LSHPEMFQFS (247 aa)).

Belongs to the nuclear hormone receptor family.

It localises to the nucleus. Its function is as follows. Orphan nuclear receptor. This chain is Nuclear hormone receptor family member nhr-44 (nhr-44), found in Caenorhabditis elegans.